A 207-amino-acid polypeptide reads, in one-letter code: Peptidyl-tRNA hydrolase (207 aa).

Y19 lines the tRNA pocket. H24 functions as the Proton acceptor in the catalytic mechanism. 3 residues coordinate tRNA: F70, N72, and N118.

It belongs to the PTH family. Monomer.

Its subcellular location is the cytoplasm. It carries out the reaction an N-acyl-L-alpha-aminoacyl-tRNA + H2O = an N-acyl-L-amino acid + a tRNA + H(+). Functionally, hydrolyzes ribosome-free peptidyl-tRNAs (with 1 or more amino acids incorporated), which drop off the ribosome during protein synthesis, or as a result of ribosome stalling. Catalyzes the release of premature peptidyl moieties from peptidyl-tRNA molecules trapped in stalled 50S ribosomal subunits, and thus maintains levels of free tRNAs and 50S ribosomes. In Synechococcus sp. (strain CC9311), this protein is Peptidyl-tRNA hydrolase.